The following is a 490-amino-acid chain: Aspartyl/glutamyl-tRNA(Asn/Gln) amidotransferase subunit B (490 aa).

This sequence belongs to the GatB/GatE family. GatB subfamily. As to quaternary structure, heterotrimer of A, B and C subunits.

It catalyses the reaction L-glutamyl-tRNA(Gln) + L-glutamine + ATP + H2O = L-glutaminyl-tRNA(Gln) + L-glutamate + ADP + phosphate + H(+). The enzyme catalyses L-aspartyl-tRNA(Asn) + L-glutamine + ATP + H2O = L-asparaginyl-tRNA(Asn) + L-glutamate + ADP + phosphate + 2 H(+). Functionally, allows the formation of correctly charged Asn-tRNA(Asn) or Gln-tRNA(Gln) through the transamidation of misacylated Asp-tRNA(Asn) or Glu-tRNA(Gln) in organisms which lack either or both of asparaginyl-tRNA or glutaminyl-tRNA synthetases. The reaction takes place in the presence of glutamine and ATP through an activated phospho-Asp-tRNA(Asn) or phospho-Glu-tRNA(Gln). This is Aspartyl/glutamyl-tRNA(Asn/Gln) amidotransferase subunit B from Synechococcus sp. (strain JA-3-3Ab) (Cyanobacteria bacterium Yellowstone A-Prime).